We begin with the raw amino-acid sequence, 65 residues long: Hainantoxin-X.3 (65 aa).

The first 20 residues, 1–20, serve as a signal peptide directing secretion; it reads MNMKILVLVAVLCLVVSTHA. Residues 21–37 constitute a propeptide that is removed on maturation; sequence ERHSKTDMGDSPMIQER. Disulfide bonds link cysteine 39/cysteine 56, cysteine 46/cysteine 59, and cysteine 55/cysteine 64.

It belongs to the neurotoxin 36 family. 02 subfamily. As to expression, expressed by the venom gland.

Its subcellular location is the secreted. Reversibly blocks N-type calcium channels (Cav2.2/CACNA1B) in rat dorsal root ganglion cells. Elicits no toxic symptoms in either vertebrates or invertebrates during a period of 48 hours post-injection, when it was assayed in vivo by direct injection into mice and cockroaches. The sequence is that of Hainantoxin-X.3 from Cyriopagopus hainanus (Chinese bird spider).